A 235-amino-acid polypeptide reads, in one-letter code: Large ribosomal subunit protein uL1 (235 aa).

The protein belongs to the universal ribosomal protein uL1 family. Part of the 50S ribosomal subunit.

Binds directly to 23S rRNA. The L1 stalk is quite mobile in the ribosome, and is involved in E site tRNA release. In terms of biological role, protein L1 is also a translational repressor protein, it controls the translation of the L11 operon by binding to its mRNA. In Corynebacterium diphtheriae (strain ATCC 700971 / NCTC 13129 / Biotype gravis), this protein is Large ribosomal subunit protein uL1.